A 297-amino-acid chain; its full sequence is Small ribosomal subunit biogenesis GTPase RsgA (297 aa).

The region spanning 65–223 (RNELVRPPVA…VADTPGFSAI (159 aa)) is the CP-type G domain. GTP is bound by residues 114–117 (TKVD) and 166–174 (GQSGAGKST). 4 residues coordinate Zn(2+): C247, C252, H254, and C260.

It belongs to the TRAFAC class YlqF/YawG GTPase family. RsgA subfamily. Monomer. Associates with 30S ribosomal subunit, binds 16S rRNA. Zn(2+) serves as cofactor.

Its subcellular location is the cytoplasm. In terms of biological role, one of several proteins that assist in the late maturation steps of the functional core of the 30S ribosomal subunit. Helps release RbfA from mature subunits. May play a role in the assembly of ribosomal proteins into the subunit. Circularly permuted GTPase that catalyzes slow GTP hydrolysis, GTPase activity is stimulated by the 30S ribosomal subunit. The chain is Small ribosomal subunit biogenesis GTPase RsgA from Enterococcus faecalis (strain ATCC 700802 / V583).